Reading from the N-terminus, the 248-residue chain is NADP-dependent 3-hydroxy acid dehydrogenase YdfG (248 aa).

NADP(+) is bound by residues 7–12 (GATAGF), 32–33 (RR), 54–55 (DV), and N81. S134 contacts substrate. NADP(+) is bound by residues Y147, K151, and 177 to 185 (PGLVGGTEF). The active-site Proton acceptor is Y147.

This sequence belongs to the short-chain dehydrogenases/reductases (SDR) family. As to quaternary structure, homotetramer.

It carries out the reaction 3-hydroxypropanoate + NADP(+) = 3-oxopropanoate + NADPH + H(+). The enzyme catalyses L-allo-threonine + NADP(+) = aminoacetone + CO2 + NADPH. Functionally, NADP-dependent dehydrogenase with broad substrate specificity acting on 3-hydroxy acids. Catalyzes the NADP-dependent oxidation of L-allo-threonine to L-2-amino-3-keto-butyrate, which is spontaneously decarboxylated into aminoacetone. Also acts on D-threonine, L-serine, D-serine, D-3-hydroxyisobutyrate, L-3-hydroxyisobutyrate, D-glycerate and L-glycerate. Able to catalyze the reduction of the malonic semialdehyde to 3-hydroxypropionic acid. YdfG is apparently supplementing RutE, the presumed malonic semialdehyde reductase involved in pyrimidine degradation since both are able to detoxify malonic semialdehyde. This chain is NADP-dependent 3-hydroxy acid dehydrogenase YdfG, found in Salmonella typhi.